We begin with the raw amino-acid sequence, 224 residues long: UPF0173 metal-dependent hydrolase EF_1371 (224 aa).

It belongs to the UPF0173 family.

The polypeptide is UPF0173 metal-dependent hydrolase EF_1371 (Enterococcus faecalis (strain ATCC 700802 / V583)).